A 2524-amino-acid polypeptide reads, in one-letter code: Neurogenic locus notch homolog protein 1 (2524 aa).

The first 19 residues, 1–19 (MDRIGLAVLLCSLPVLTQG), serve as a signal peptide directing secretion. EGF-like domains are found at residues 20-57 (LRCT…ERCQ), 58-99 (FPNP…KVCL), 102-140 (VDNA…DSCQ), and 141-177 (QADP…ATCK). The Extracellular portion of the chain corresponds to 20-1729 (LRCTQTAEMC…METPKPSTLY (1710 aa)). 33 disulfides stabilise this stretch: cysteine 22–cysteine 35, cysteine 29–cysteine 45, cysteine 47–cysteine 56, cysteine 62–cysteine 74, cysteine 68–cysteine 87, cysteine 89–cysteine 98, cysteine 106–cysteine 117, cysteine 111–cysteine 128, cysteine 130–cysteine 139, cysteine 145–cysteine 156, cysteine 150–cysteine 165, cysteine 167–cysteine 176, cysteine 183–cysteine 194, cysteine 188–cysteine 203, cysteine 205–cysteine 214, cysteine 221–cysteine 232, cysteine 226–cysteine 242, cysteine 244–cysteine 253, cysteine 260–cysteine 271, cysteine 265–cysteine 280, cysteine 282–cysteine 291, cysteine 298–cysteine 311, cysteine 305–cysteine 320, cysteine 322–cysteine 331, cysteine 338–cysteine 349, cysteine 343–cysteine 358, cysteine 360–cysteine 369, cysteine 375–cysteine 386, cysteine 380–cysteine 397, cysteine 399–cysteine 408, cysteine 415–cysteine 428, cysteine 422–cysteine 437, and cysteine 439–cysteine 448. The 37-residue stretch at 179–215 (DINECSQNPCKNGGQCINEFGSYRCTCQNRFTGRNCD) folds into the EGF-like 5; calcium-binding domain. One can recognise an EGF-like 6 domain in the interval 217 to 254 (PYVPCNPSPCLNGGTCRQTDDTSYDCTCLPGFSGQNCE). Residue threonine 231 is glycosylated (O-linked (Fuc...) threonine; alternate). The O-linked (GalNAc...) threonine; alternate glycan is linked to threonine 231. Residues 256–292 (NIDDCPSNNCRNGGTCVDGVNTYNCQCPPDWTGQYCT) enclose the EGF-like 7; calcium-binding domain. One can recognise an EGF-like 8; calcium-binding domain in the interval 294–332 (DVDECQLMPNACQNGGTCHNTYGGYNCVCVNGWTGEDCS). Positions 334-370 (NIDDCANAACHSGATCHDRVASFYCECPHGRTGLLCH) constitute an EGF-like 9; calcium-binding domain. Residues 371–409 (LDNACISNPCNEGSNCDTNPVNGKAICTCPPGYTGPACN) form the EGF-like 10 domain. One can recognise an EGF-like 11; calcium-binding domain in the interval 411 to 449 (DVDECSLGANPCEHGGRCTNTLGSFQCNCPQGYAGPRCE). Residues threonine 431 and serine 434 each coordinate Ca(2+). Serine 434 carries O-linked (Glc...) serine glycosylation. The Ca(2+) site is built by aspartate 451, valine 452, and glutamate 454. Residues 451–487 (DVNECLSNPCQNDSTCLDQIGEFQCICMPGYEGLYCE) enclose the EGF-like 12; calcium-binding domain. 3 cysteine pairs are disulfide-bonded: cysteine 455–cysteine 466, cysteine 460–cysteine 475, and cysteine 477–cysteine 486. Serine 457 carries an O-linked (Glc...) serine glycan. N-linked (GlcNAc...) asparagine glycosylation is present at asparagine 462. O-linked (Fuc...) threonine glycosylation occurs at threonine 465. Ca(2+)-binding residues include aspartate 468 and glutamine 469. Residues asparagine 489, isoleucine 490, and glutamate 492 each coordinate Ca(2+). Positions 489 to 525 (NIDECASNPCLHNGKCIDKINEFRCDCPTGFSGNLCQ) constitute an EGF-like 13; calcium-binding domain. 75 disulfides stabilise this stretch: cysteine 493/cysteine 504, cysteine 498/cysteine 513, cysteine 515/cysteine 524, cysteine 531/cysteine 542, cysteine 536/cysteine 551, cysteine 553/cysteine 562, cysteine 569/cysteine 579, cysteine 574/cysteine 588, cysteine 590/cysteine 599, cysteine 606/cysteine 617, cysteine 611/cysteine 626, cysteine 628/cysteine 637, cysteine 644/cysteine 654, cysteine 649/cysteine 663, cysteine 665/cysteine 674, cysteine 681/cysteine 692, cysteine 686/cysteine 701, cysteine 703/cysteine 712, cysteine 719/cysteine 729, cysteine 724/cysteine 738, cysteine 740/cysteine 749, cysteine 756/cysteine 767, cysteine 761/cysteine 776, cysteine 778/cysteine 787, cysteine 794/cysteine 805, cysteine 799/cysteine 814, cysteine 816/cysteine 825, cysteine 832/cysteine 843, cysteine 837/cysteine 854, cysteine 856/cysteine 865, cysteine 872/cysteine 883, cysteine 877/cysteine 892, cysteine 894/cysteine 903, cysteine 910/cysteine 921, cysteine 915/cysteine 930, cysteine 932/cysteine 941, cysteine 948/cysteine 959, cysteine 953/cysteine 968, cysteine 970/cysteine 979, cysteine 986/cysteine 997, cysteine 991/cysteine 1006, cysteine 1008/cysteine 1017, cysteine 1024/cysteine 1035, cysteine 1029/cysteine 1044, cysteine 1046/cysteine 1055, cysteine 1062/cysteine 1073, cysteine 1067/cysteine 1082, cysteine 1084/cysteine 1093, cysteine 1100/cysteine 1121, cysteine 1115/cysteine 1130, cysteine 1132/cysteine 1141, cysteine 1148/cysteine 1159, cysteine 1153/cysteine 1168, cysteine 1170/cysteine 1179, cysteine 1186/cysteine 1197, cysteine 1191/cysteine 1206, cysteine 1208/cysteine 1217, cysteine 1224/cysteine 1243, cysteine 1237/cysteine 1252, cysteine 1254/cysteine 1263, cysteine 1270/cysteine 1283, cysteine 1275/cysteine 1292, cysteine 1294/cysteine 1303, cysteine 1310/cysteine 1321, cysteine 1315/cysteine 1333, cysteine 1335/cysteine 1344, cysteine 1351/cysteine 1362, cysteine 1356/cysteine 1371, cysteine 1373/cysteine 1382, cysteine 1390/cysteine 1401, cysteine 1395/cysteine 1412, cysteine 1414/cysteine 1423, cysteine 1447/cysteine 1470, cysteine 1452/cysteine 1465, and cysteine 1461/cysteine 1477. The O-linked (Glc...) serine glycan is linked to serine 495. Residues aspartate 506 and lysine 507 each coordinate Ca(2+). An EGF-like 14; calcium-binding domain is found at 527-563 (DFDECTSTPCKNGAKCLDGPNSYTCQCTEGFTGRHCE). Positions 565–600 (DINECIPDPCHYGTCKDGIATFTCLCRPGYTGRLCD) constitute an EGF-like 15; calcium-binding domain. The EGF-like 16; calcium-binding domain occupies 602 to 638 (DINECLSKPCLNGGQCTDRENGYICTCPKGTTGVNCE). The EGF-like 17 domain occupies 640-675 (KIDDCASNLCDNGKCIDKIDGYECTCEPGYTGKLCN). In terms of domain architecture, EGF-like 18; calcium-binding spans 677–713 (NINECDSNPCRNGGTCKDQINGFTCVCPDGYHDHMCL). The EGF-like 19; calcium-binding domain occupies 715–750 (EVNECNSNPCIHGACHDGVNGYKCDCEAGWSGSNCD). Residues 752–788 (NNNECESNPCMNGGTCKDMTGAYICTCKAGFSGPNCQ) enclose the EGF-like 20; calcium-binding domain. In terms of domain architecture, EGF-like 21; calcium-binding spans 790–826 (NINECSSNPCLNHGTCIDDVAGYKCNCMLPYTGAICE). In terms of domain architecture, EGF-like 22 spans 828–866 (VLAPCAGSPCKNGGRCKESEDFETFSCECPPGWQGQTCE). Positions 868-904 (DMNECVNRPCRNGATCQNTNGSYKCNCKPGYTGRNCE) constitute an EGF-like 23; calcium-binding domain. The N-linked (GlcNAc...) asparagine glycan is linked to asparagine 887. An EGF-like 24; calcium-binding domain is found at 906 to 942 (DIDDCQPNPCHNGGSCSDGINMFFCNCPAGFRGPKCE). Residues 944-980 (DINECASNPCKNGANCTDCVNSYTCTCQPGFSGIHCE) enclose the EGF-like 25; calcium-binding domain. N-linked (GlcNAc...) asparagine glycosylation is present at asparagine 958. Positions 982-1018 (NTPDCTESSCFNGGTCIDGINTFTCQCPPGFTGSYCQ) constitute an EGF-like 26 domain. The 37-residue stretch at 1020–1056 (DINECDSKPCLNGGTCQDSYGTYKCTCPQGYTGLNCQ) folds into the EGF-like 27; calcium-binding domain. EGF-like domains lie at 1058-1094 (LVRW…VYCD) and 1096-1142 (PSVS…SYCE). One can recognise an EGF-like 30; calcium-binding domain in the interval 1144 to 1180 (QVDECSPNPCQNGATCTDYLGGYSCECVAGYHGVNCS). The N-linked (GlcNAc...) asparagine glycan is linked to asparagine 1178. One can recognise an EGF-like 31; calcium-binding domain in the interval 1182–1218 (EINECLSHPCQNGGTCIDLINTYKCSCPRGTQGVHCE). One can recognise an EGF-like 32; calcium-binding domain in the interval 1220 to 1264 (NVDDCTPFYDSFTLEPKCFNNGKCIDRVGGYNCICPPGFVGERCE). 4 consecutive EGF-like domains span residues 1266–1304 (DVNE…RRCE), 1306–1346 (VVDG…TCEY), 1347–1383 (DSRT…ATCQ), and 1386–1424 (VISP…LFCH). Residue threonine 1400 is glycosylated (O-linked (Fuc...) threonine; alternate). An O-linked (GalNAc...) threonine; alternate glycan is attached at threonine 1400. LNR repeat units lie at residues 1447–1487 (CENE…PWKN), 1488–1529 (CTQS…CNPL), and 1530–1564 (YDQY…NMPE). N-linked (GlcNAc...) asparagine glycosylation occurs at asparagine 1487. Disulfide bonds link cysteine 1488/cysteine 1512, cysteine 1494/cysteine 1507, cysteine 1503/cysteine 1519, cysteine 1534/cysteine 1547, and cysteine 1543/cysteine 1559. Asparagine 1508 carries N-linked (GlcNAc...) asparagine glycosylation. A glycan (N-linked (GlcNAc...) asparagine) is linked at asparagine 1584. Residues 1730–1750 (PMLSMLVIPLLIIFVFMMVIV) traverse the membrane as a helical segment. Residues 1751-2524 (NKKRRREHGQ…QRTHIPEAFK (774 aa)) are Cytoplasmic-facing. ANK repeat units follow at residues 1876 to 1919 (DGFT…QLHN), 1924 to 1953 (TGET…DANV), 1957 to 1987 (MGRT…DLDA), 1991 to 2020 (DGTT…DVNA), 2024 to 2053 (FGKS…NKDM), and 2057 to 2086 (KEET…NRDI). Disordered stretches follow at residues 2144-2230 (NMKP…LNHL), 2369-2407 (MQAQ…FCSS), and 2451-2524 (LTPP…EAFK). 2 stretches are compositionally biased toward polar residues: residues 2180 to 2192 (GKTT…SSGV) and 2208 to 2230 (DVSS…LNHL). Positions 2369–2394 (MQAQQMQQQQNLQLHQSMQQQHHNSS) are enriched in low complexity. Polar residues-rich tracts occupy residues 2395 to 2407 (TTST…FCSS) and 2451 to 2471 (LTPP…SHQL). Residues 2481 to 2496 (PSPESPDQWSSSSPHS) show a composition bias toward low complexity. A compositionally biased stretch (polar residues) spans 2497–2516 (NMSDWSEGISSPPTSMQPQR).

This sequence belongs to the NOTCH family. In terms of assembly, forms a ternary complex with nrarp and rbpj/suh. Post-translationally, O-glycosylated on the EGF-like domains. Contains both O-linked fucose and O-linked glucose. O-linked glycosylation by galnt11 is involved in determination of left/right symmetry: glycosylation promotes activation of notch1, possibly by promoting cleavage by adam17, modulating the balance between motile and immotile (sensory) cilia at the left-right organiser (LRO). In terms of processing, synthesized in the endoplasmic reticulum as an inactive form which is proteolytically cleaved by a furin-like convertase in the trans-Golgi network before it reaches the plasma membrane to yield an active, ligand-accessible form. Cleavage results in a C-terminal fragment N(TM) and a N-terminal fragment N(EC). Following ligand binding, it is cleaved by adam17 to yield a membrane-associated intermediate fragment called notch extracellular truncation (NEXT). Following endocytosis, this fragment is then cleaved by presenilin dependent gamma-secretase to release a Notch-derived peptide containing the intracellular domain (NICD) from the membrane.

The protein resides in the cell membrane. It is found in the nucleus. In terms of biological role, functions as a receptor for membrane-bound ligands Jagged-1 (JAG1), Jagged-2 (JAG2) and Delta-1 (DLL1) to regulate cell-fate determination. Upon ligand activation through the released notch intracellular domain (NICD) it forms a transcriptional activator complex with RBPJ/RBPSUH and activates genes of the enhancer of split locus. Affects the implementation of differentiation, proliferation and apoptotic programs. Involved in angiogenesis; negatively regulates endothelial cell proliferation and migration and angiogenic sprouting. Involved in the maturation of both CD4(+) and CD8(+) cells in the thymus. Important for follicular differentiation and possibly cell fate selection within the follicle. During cerebellar development, functions as a receptor for neuronal DNER and is involved in the differentiation of Bergmann glia. Represses neuronal and myogenic differentiation. May play an essential role in postimplantation development, probably in some aspect of cell specification and/or differentiation. May be involved in mesoderm development, somite formation and neurogenesis. Involved in determination of left/right symmetry by modulating the balance between motile and immotile (sensory) cilia at the left-right organiser (LRO). The chain is Neurogenic locus notch homolog protein 1 (notch1) from Xenopus laevis (African clawed frog).